A 380-amino-acid polypeptide reads, in one-letter code: Crotonobetainyl-CoA reductase (380 aa).

The protein belongs to the acyl-CoA dehydrogenase family. In terms of assembly, homotetramer. The cofactor is FAD.

Its subcellular location is the cytoplasm. It catalyses the reaction 4-(trimethylamino)butanoyl-CoA + oxidized [electron-transfer flavoprotein] + H(+) = crotonobetainyl-CoA + reduced [electron-transfer flavoprotein]. It functions in the pathway amine and polyamine metabolism; carnitine metabolism. Catalyzes the reduction of crotonobetainyl-CoA to gamma-butyrobetainyl-CoA. The protein is Crotonobetainyl-CoA reductase of Salmonella typhi.